We begin with the raw amino-acid sequence, 384 residues long: GDP/UDP-N,N'-diacetylbacillosamine 2-epimerase (hydrolyzing) (384 aa).

It belongs to the UDP-N-acetylglucosamine 2-epimerase family.

It catalyses the reaction GDP-N,N'-diacetylbacillosamine + H2O = 2,4-diacetamido-2,4,6-trideoxy-alpha-D-mannopyranose + GDP + H(+). The enzyme catalyses UDP-N,N'-diacetylbacillosamine + H2O = 2,4-diacetamido-2,4,6-trideoxy-alpha-D-mannopyranose + UDP + H(+). Functionally, involved in biosynthesis of legionaminic acid (5,7-diamino-3,5,7,9-tetradeoxy-D-glycero-D-galacto-non-2-ulosonic acid)(Leg), a sialic acid-like derivative that is incorporated into flagellin via O-linkage to Ser/Thr. Catalyzes the conversion of GDP-N,N'-diacetylbacillosamine (Bac2Ac4Ac) into 2,4-diacetamido-2,4,6-trideoxymannose and GDP. It can also use UDP-N,N'-diacetylbacillosamine however it generates small quantities of 2,4-diacetamido-2,4,6-trideoxymannose. This is GDP/UDP-N,N'-diacetylbacillosamine 2-epimerase (hydrolyzing) (legG) from Campylobacter jejuni subsp. jejuni serotype O:2 (strain ATCC 700819 / NCTC 11168).